Here is a 992-residue protein sequence, read N- to C-terminus: RNA-directed RNA polymerase (992 aa).

The RdRp catalytic domain maps to 656–772; the sequence is PCAIGFDASR…ICSVDDEEVV (117 aa). The segment at 963–992 is disordered; it reads PKSPTKPVQRTASKPDLPDSQWQQALAAPL. Positions 964–974 are enriched in polar residues; that stretch reads KSPTKPVQRTA.

This sequence belongs to the tombusviridae RNA polymerase family.

Its subcellular location is the host membrane. The enzyme catalyses RNA(n) + a ribonucleoside 5'-triphosphate = RNA(n+1) + diphosphate. In terms of biological role, RNA-dependent RNA polymerase that plays an essential role in the virus replication. The polypeptide is RNA-directed RNA polymerase (Muhlenbergia (Blackwell switchgrass)).